Here is a 138-residue protein sequence, read N- to C-terminus: Basic phospholipase A2 PLA-B' (138 aa).

The N-terminal stretch at 1-16 (MRTLWITAVLLVGVEG) is a signal peptide. Cystine bridges form between Cys-42-Cys-131, Cys-44-Cys-60, Cys-59-Cys-111, Cys-65-Cys-138, Cys-66-Cys-104, Cys-73-Cys-97, and Cys-91-Cys-102. Ca(2+) is bound by residues Tyr-43, Gly-45, and Gly-47. Residue His-63 is part of the active site. Asp-64 serves as a coordination point for Ca(2+). The active site involves Asp-105.

Belongs to the phospholipase A2 family. Group II subfamily. D49 sub-subfamily. Requires Ca(2+) as cofactor. Expressed by the venom gland.

Its subcellular location is the secreted. It carries out the reaction a 1,2-diacyl-sn-glycero-3-phosphocholine + H2O = a 1-acyl-sn-glycero-3-phosphocholine + a fatty acid + H(+). Its function is as follows. PLA2 catalyzes the calcium-dependent hydrolysis of the 2-acyl groups in 3-sn-phosphoglycerides. This Protobothrops flavoviridis (Habu) protein is Basic phospholipase A2 PLA-B'.